We begin with the raw amino-acid sequence, 151 residues long: MLDFGELLPLQPPTIPAHQLPPAALAYFGDAVYELFIRLLFLTPPQRINAYHRQVVAHVRAESQARYMDFLWEYCTETERSIFRQGRNAAADGPKRVAAKIYRQATGFEALLGYLYLTNPQRLQEIFQLLAGHIRSEVENKTHAAESPSEM.

D30 is a catalytic residue.

Belongs to the MrnC RNase family. Homodimer. Requires Mg(2+) as cofactor.

The protein resides in the cytoplasm. Involved in correct processing of both the 5' and 3' ends of 23S rRNA precursor. Processes 30S rRNA precursor transcript even in absence of ribonuclease 3 (Rnc); Rnc processes 30S rRNA into smaller rRNA precursors. This is Mini-ribonuclease 3 from Thermosynechococcus vestitus (strain NIES-2133 / IAM M-273 / BP-1).